The primary structure comprises 426 residues: D-tagatose-1,6-bisphosphate aldolase subunit KbaZ (426 aa).

This sequence belongs to the GatZ/KbaZ family. KbaZ subfamily. As to quaternary structure, forms a complex with KbaY.

It functions in the pathway carbohydrate metabolism; D-tagatose 6-phosphate degradation; D-glyceraldehyde 3-phosphate and glycerone phosphate from D-tagatose 6-phosphate: step 2/2. In terms of biological role, component of the tagatose-1,6-bisphosphate aldolase KbaYZ that is required for full activity and stability of the Y subunit. Could have a chaperone-like function for the proper and stable folding of KbaY. When expressed alone, KbaZ does not show any aldolase activity. The chain is D-tagatose-1,6-bisphosphate aldolase subunit KbaZ from Escherichia coli O1:K1 / APEC.